We begin with the raw amino-acid sequence, 295 residues long: Fructose-bisphosphate aldolase class 1 (295 aa).

The active-site Proton acceptor is the Glu-176. Catalysis depends on Lys-213, which acts as the Schiff-base intermediate with dihydroxyacetone-P.

It belongs to the class I fructose-bisphosphate aldolase family.

It carries out the reaction beta-D-fructose 1,6-bisphosphate = D-glyceraldehyde 3-phosphate + dihydroxyacetone phosphate. Its pathway is carbohydrate degradation; glycolysis; D-glyceraldehyde 3-phosphate and glycerone phosphate from D-glucose: step 4/4. The polypeptide is Fructose-bisphosphate aldolase class 1 (Clostridium acetobutylicum (strain ATCC 824 / DSM 792 / JCM 1419 / IAM 19013 / LMG 5710 / NBRC 13948 / NRRL B-527 / VKM B-1787 / 2291 / W)).